Consider the following 140-residue polypeptide: 3-hydroxyacyl-[acyl-carrier-protein] dehydratase FabZ (140 aa).

H47 is an active-site residue.

It belongs to the thioester dehydratase family. FabZ subfamily.

It localises to the cytoplasm. It catalyses the reaction a (3R)-hydroxyacyl-[ACP] = a (2E)-enoyl-[ACP] + H2O. In terms of biological role, involved in unsaturated fatty acids biosynthesis. Catalyzes the dehydration of short chain beta-hydroxyacyl-ACPs and long chain saturated and unsaturated beta-hydroxyacyl-ACPs. The protein is 3-hydroxyacyl-[acyl-carrier-protein] dehydratase FabZ of Streptococcus pneumoniae serotype 2 (strain D39 / NCTC 7466).